Consider the following 189-residue polypeptide: Ion-translocating oxidoreductase complex subunit B (189 aa).

The hydrophobic stretch occupies residues 1–26 (MSQVIIAIILLGLLALAFGALLGYAA). Residues 32 to 90 (EGDPIIDQAEALLPQTQCGQCGYPGCRPYAEAIANGEKINKCPPGGTATMEKLAELMGV) enclose the 4Fe-4S domain. [4Fe-4S] cluster contacts are provided by cysteine 49, cysteine 52, cysteine 57, cysteine 73, cysteine 114, cysteine 117, cysteine 120, cysteine 124, cysteine 144, cysteine 147, cysteine 150, and cysteine 154. 4Fe-4S ferredoxin-type domains are found at residues 105–134 (KVAF…GTGK) and 135–164 (QMHT…MIPV).

Belongs to the 4Fe4S bacterial-type ferredoxin family. RnfB subfamily. The complex is composed of six subunits: RnfA, RnfB, RnfC, RnfD, RnfE and RnfG. Requires [4Fe-4S] cluster as cofactor.

It is found in the cell inner membrane. In terms of biological role, part of a membrane-bound complex that couples electron transfer with translocation of ions across the membrane. In Shewanella loihica (strain ATCC BAA-1088 / PV-4), this protein is Ion-translocating oxidoreductase complex subunit B.